A 43-amino-acid chain; its full sequence is METATLVAISISCLLVSFTGYALYTAFGQPSEQLRDPFEDHED.

A helical membrane pass occupies residues 5 to 27 (TLVAISISCLLVSFTGYALYTAF).

It belongs to the PsbN family.

The protein localises to the plastid. It is found in the chloroplast thylakoid membrane. Its function is as follows. May play a role in photosystem I and II biogenesis. The chain is Protein PsbN from Cedrus deodara (Deodar cedar).